The sequence spans 231 residues: Ribonuclease HII (231 aa).

Positions 33–222 (WPVAGADEAG…FREAQEQPLA (190 aa)) constitute an RNase H type-2 domain. A divalent metal cation contacts are provided by D39, E40, and D130.

The protein belongs to the RNase HII family. It depends on Mn(2+) as a cofactor. The cofactor is Mg(2+).

The protein localises to the cytoplasm. The enzyme catalyses Endonucleolytic cleavage to 5'-phosphomonoester.. Functionally, endonuclease that specifically degrades the RNA of RNA-DNA hybrids. In Sinorhizobium fredii (strain NBRC 101917 / NGR234), this protein is Ribonuclease HII.